The sequence spans 398 residues: Enolase (398 aa).

Position 154 (Gln154) interacts with (2R)-2-phosphoglycerate. Glu196 functions as the Proton donor in the catalytic mechanism. Positions 232, 273, and 300 each coordinate Mg(2+). 4 residues coordinate (2R)-2-phosphoglycerate: Lys325, Arg354, Ser355, and Lys376. The active-site Proton acceptor is the Lys325.

The protein belongs to the enolase family. It depends on Mg(2+) as a cofactor.

The protein localises to the cytoplasm. The protein resides in the secreted. It localises to the cell surface. The enzyme catalyses (2R)-2-phosphoglycerate = phosphoenolpyruvate + H2O. The protein operates within carbohydrate degradation; glycolysis; pyruvate from D-glyceraldehyde 3-phosphate: step 4/5. Its function is as follows. Catalyzes the reversible conversion of 2-phosphoglycerate (2-PG) into phosphoenolpyruvate (PEP). It is essential for the degradation of carbohydrates via glycolysis. The sequence is that of Enolase from Natronomonas pharaonis (strain ATCC 35678 / DSM 2160 / CIP 103997 / JCM 8858 / NBRC 14720 / NCIMB 2260 / Gabara) (Halobacterium pharaonis).